The chain runs to 210 residues: Thiamine-phosphate synthase (210 aa).

4-amino-2-methyl-5-(diphosphooxymethyl)pyrimidine-binding positions include 39–43 and Asn-71; that span reads QLREK. The Mg(2+) site is built by Asp-72 and Asp-91. Ser-110 lines the 4-amino-2-methyl-5-(diphosphooxymethyl)pyrimidine pocket. A 2-[(2R,5Z)-2-carboxy-4-methylthiazol-5(2H)-ylidene]ethyl phosphate-binding site is contributed by 134–136; it reads TPT. Lys-137 is a 4-amino-2-methyl-5-(diphosphooxymethyl)pyrimidine binding site. Residue Gly-163 coordinates 2-[(2R,5Z)-2-carboxy-4-methylthiazol-5(2H)-ylidene]ethyl phosphate.

It belongs to the thiamine-phosphate synthase family. Requires Mg(2+) as cofactor.

The enzyme catalyses 2-[(2R,5Z)-2-carboxy-4-methylthiazol-5(2H)-ylidene]ethyl phosphate + 4-amino-2-methyl-5-(diphosphooxymethyl)pyrimidine + 2 H(+) = thiamine phosphate + CO2 + diphosphate. It carries out the reaction 2-(2-carboxy-4-methylthiazol-5-yl)ethyl phosphate + 4-amino-2-methyl-5-(diphosphooxymethyl)pyrimidine + 2 H(+) = thiamine phosphate + CO2 + diphosphate. It catalyses the reaction 4-methyl-5-(2-phosphooxyethyl)-thiazole + 4-amino-2-methyl-5-(diphosphooxymethyl)pyrimidine + H(+) = thiamine phosphate + diphosphate. Its pathway is cofactor biosynthesis; thiamine diphosphate biosynthesis; thiamine phosphate from 4-amino-2-methyl-5-diphosphomethylpyrimidine and 4-methyl-5-(2-phosphoethyl)-thiazole: step 1/1. Its function is as follows. Condenses 4-methyl-5-(beta-hydroxyethyl)thiazole monophosphate (THZ-P) and 2-methyl-4-amino-5-hydroxymethyl pyrimidine pyrophosphate (HMP-PP) to form thiamine monophosphate (TMP). This is Thiamine-phosphate synthase from Campylobacter jejuni subsp. jejuni serotype O:2 (strain ATCC 700819 / NCTC 11168).